A 423-amino-acid polypeptide reads, in one-letter code: Glycine amidinotransferase, mitochondrial (423 aa).

Residues 1 to 43 constitute a mitochondrion transit peptide; the sequence is MLRVRCLRGGSRGAEAVHYIGSRLGGSLTGWVQRTFQSTQAAT. 2 positions are modified to phosphoserine: S46 and S49. D170 contributes to the arginine binding site. Catalysis depends on residues D254 and H303. Arginine-binding residues include D305, R322, S354, and S355. K385 is modified (N6-acetyllysine). Residue C407 is the Amidino-cysteine intermediate of the active site.

The protein belongs to the amidinotransferase family. In terms of assembly, homodimer. As to expression, expressed in kidney, brain, gonads, uterus, and embryonic head, chest and abdomen. Maternally expressed in the placenta and yolk sac of embryos.

The protein localises to the mitochondrion inner membrane. The enzyme catalyses L-arginine + glycine = guanidinoacetate + L-ornithine. The catalysed reaction is 4-aminobutanoate + L-arginine = 4-guanidinobutanoate + L-ornithine. It catalyses the reaction beta-alanine + L-arginine = 3-guanidinopropanoate + L-ornithine. It carries out the reaction taurine + L-arginine = taurocyamine + L-ornithine. The protein operates within amine and polyamine biosynthesis; creatine biosynthesis; creatine from L-arginine and glycine: step 1/2. Transamidinase that catalyzes the transfer of the amidino group of L-arginine onto the amino moiety of acceptor metabolites such as glycine, beta-alanine, gamma-aminobutyric acid (GABA) and taurine yielding the corresponding guanidine derivatives. Catalyzes the rate-limiting step of creatine biosynthesis, namely the transfer of the amidino group from L-arginine to glycine to generate guanidinoacetate, which is then methylated by GAMT to form creatine. Provides creatine as a source for ATP generation in tissues with high energy demands, in particular skeletal muscle, heart and brain. In Mus musculus (Mouse), this protein is Glycine amidinotransferase, mitochondrial (Gatm).